A 155-amino-acid chain; its full sequence is Histone H3-like centromeric protein hH3v (155 aa).

Residues 1–24 are compositionally biased toward low complexity; that stretch reads MPPKKGGVTKSKAVSKKAAAVPTP. Residues 1 to 56 are disordered; sequence MPPKKGGVTKSKAVSKKAAAVPTPKATPPGRRKSRASSVQPGDPVPQGKKRRYRPG. The tract at residues 45–148 is H3-like; sequence VPQGKKRRYR…IQLARRIRGV (104 aa).

This sequence belongs to the histone H3 family. As to quaternary structure, component of centromeric nucleosomes, where DNA is wrapped around a histone octamer core. The octamer contains two molecules each of H2A, H2B, hH3v/CENPA and H4 assembled in one hH3v-H4 heterotetramer and two H2A-H2B heterodimers. Interacts with the inner kinetochore. Post-translationally, ubiquitinated. Is degraded through ubiquitin-mediated proteolysis when not protected by its association to the kinetochore.

Its subcellular location is the nucleus. The protein localises to the chromosome. It localises to the centromere. Its function is as follows. Histone H3-like nucleosomal protein that is specifically found in centromeric nucleosomes. Replaces conventional H3 in the nucleosome core of centromeric chromatin that serves as an assembly site for the inner kinetochore. Required for recruitment and assembly of kinetochore proteins, mitotic progression and chromosome segregation. May serve as an epigenetic mark that propagates centromere identity through replication and cell division. In Neurospora crassa (strain ATCC 24698 / 74-OR23-1A / CBS 708.71 / DSM 1257 / FGSC 987), this protein is Histone H3-like centromeric protein hH3v (hH3v).